The following is a 411-amino-acid chain: CCA-adding enzyme (411 aa).

Residues glycine 8 and arginine 11 each coordinate ATP. CTP contacts are provided by glycine 8 and arginine 11. Mg(2+) contacts are provided by glutamate 21 and aspartate 23. ATP contacts are provided by arginine 91, arginine 137, and arginine 140. Residues arginine 91, arginine 137, and arginine 140 each coordinate CTP. Residues 227 to 328 (LGNQTMTRLS…MTIFQAFDCW (102 aa)) enclose the HD domain.

Belongs to the tRNA nucleotidyltransferase/poly(A) polymerase family. Bacterial CCA-adding enzyme type 2 subfamily. Mg(2+) serves as cofactor.

It carries out the reaction a tRNA precursor + 2 CTP + ATP = a tRNA with a 3' CCA end + 3 diphosphate. The enzyme catalyses a tRNA with a 3' CCA end + 2 CTP + ATP = a tRNA with a 3' CCACCA end + 3 diphosphate. In terms of biological role, catalyzes the addition and repair of the essential 3'-terminal CCA sequence in tRNAs without using a nucleic acid template. Adds these three nucleotides in the order of C, C, and A to the tRNA nucleotide-73, using CTP and ATP as substrates and producing inorganic pyrophosphate. tRNA 3'-terminal CCA addition is required both for tRNA processing and repair. Also involved in tRNA surveillance by mediating tandem CCA addition to generate a CCACCA at the 3' terminus of unstable tRNAs. While stable tRNAs receive only 3'-terminal CCA, unstable tRNAs are marked with CCACCA and rapidly degraded. This is CCA-adding enzyme from Blochmanniella floridana.